We begin with the raw amino-acid sequence, 667 residues long: MSFYRGRINKGSGLFKSFPSNGEYIKKITPGIGEYFYKKHKFSGDSGLKQLSAQAWRDKLDEDDLLEYGSATYNASLPGDIIRRFFYFQFYNNVVTHPLLDLISIRRDHEAPFSDRNESKIKLDPAKRLPLGLRLADVFARWFDIYDLGWLKTLWNTYSDTGLSEIHRTYDIIFVHIVNRVAKVNPELMNFRTGDYDEILRCMRAIHAFAVLTDDVYDLYEKELIEPIRDRYEEILSAYMEEDDIPHYGLWDTVYYEGYTNLLEYVNLLIGDQTRASDTRQLSMPLITDICHLLKYIDINKGSYYRLERMLNRVDKVEKESPSYDNNIPTTRSERKKRRVGPIITTDRVYNYKGSWVDPQDDMYVVYDALRRKYKTMFFTQNTIEITTIERVSERYSLDFIERDDDGVGMTDTIKTILEDHRFNTLMKEVSKSDNTLNMLVNGNVEPVECKFASITMGEDDSVLESVNLELTVSDKYYLDDAMVFYIYVYNTLTNKNIPTAATLETLRDGPFSKPVPLKVKDVIDGYMQKHHGLGVISEKYTVEDYLLICLSDLYERDVPKFLDIYLQNRRDGYEIAENIKAILILLTSPAVSKYVYRKLMGDLLTDEDAIQYAGRAEVVTELSGVVKGNRELGFVNRYIKQGIYRASPYNVFKTDLEYLLSVLADE.

This is an uncharacterized protein from Magallana gigas (Pacific oyster).